Here is a 123-residue protein sequence, read N- to C-terminus: Small ribosomal subunit protein uS12 (123 aa).

Residues 1–21 (MPTIEQLVRKGRQAKPKKSKT) form a disordered region. Residues 9-20 (RKGRQAKPKKSK) show a composition bias toward basic residues. D89 carries the post-translational modification 3-methylthioaspartic acid.

Belongs to the universal ribosomal protein uS12 family. As to quaternary structure, part of the 30S ribosomal subunit. Contacts proteins S8 and S17. May interact with IF1 in the 30S initiation complex.

With S4 and S5 plays an important role in translational accuracy. In terms of biological role, interacts with and stabilizes bases of the 16S rRNA that are involved in tRNA selection in the A site and with the mRNA backbone. Located at the interface of the 30S and 50S subunits, it traverses the body of the 30S subunit contacting proteins on the other side and probably holding the rRNA structure together. The combined cluster of proteins S8, S12 and S17 appears to hold together the shoulder and platform of the 30S subunit. This chain is Small ribosomal subunit protein uS12, found in Bifidobacterium adolescentis (strain ATCC 15703 / DSM 20083 / NCTC 11814 / E194a).